Here is a 545-residue protein sequence, read N- to C-terminus: Cytochrome bc1 complex cytochrome b subunit (545 aa).

Residues 54–74 (VCLYSFIIIILTGVYLTLFFH) traverse the membrane as a helical segment. 2 residues coordinate heme: H118 and H132. 3 helical membrane passes run 122–142 (ALIF…TGAF), 150–170 (WLFG…GYSL), and 182–202 (FMEG…FFLF). The heme site is built by H219 and H234. Transmembrane regions (helical) follow at residues 220 to 240 (ILLL…LVFY), 269 to 289 (AGGF…IATI), 335 to 355 (LVLG…AIAV), 385 to 405 (FGVA…NDLW), and 413 to 433 (INAI…VAFI).

This sequence belongs to the cytochrome b family. As to quaternary structure, the cytochrome bc1 complex is composed of a cytochrome b (QcrB), the Rieske iron-sulfur protein (QcrA) and a diheme cytochrome c (QcrC) subunit. The cofactor is heme.

The protein resides in the cell membrane. The catalysed reaction is a quinol + 2 Fe(III)-[cytochrome c](out) = a quinone + 2 Fe(II)-[cytochrome c](out) + 2 H(+)(out). Its function is as follows. Cytochrome b subunit of the cytochrome bc1 complex, an essential component of the respiratory electron transport chain required for ATP synthesis. The bc1 complex catalyzes the oxidation of ubiquinol and the reduction of cytochrome c in the respiratory chain. The bc1 complex operates through a Q-cycle mechanism that couples electron transfer to generation of the proton gradient that drives ATP synthesis. The cytochrome b subunit contains two ubiquinol reactive sites: the oxidation (QP) site and the reduction (QN) site. This is Cytochrome bc1 complex cytochrome b subunit (qcrB) from Streptomyces coelicolor (strain ATCC BAA-471 / A3(2) / M145).